An 89-amino-acid chain; its full sequence is Small ribosomal subunit protein uS15 (89 aa).

The protein belongs to the universal ribosomal protein uS15 family. In terms of assembly, part of the 30S ribosomal subunit. Forms a bridge to the 50S subunit in the 70S ribosome, contacting the 23S rRNA.

In terms of biological role, one of the primary rRNA binding proteins, it binds directly to 16S rRNA where it helps nucleate assembly of the platform of the 30S subunit by binding and bridging several RNA helices of the 16S rRNA. Its function is as follows. Forms an intersubunit bridge (bridge B4) with the 23S rRNA of the 50S subunit in the ribosome. The sequence is that of Small ribosomal subunit protein uS15 from Rhizorhabdus wittichii (strain DSM 6014 / CCUG 31198 / JCM 15750 / NBRC 105917 / EY 4224 / RW1) (Sphingomonas wittichii).